The chain runs to 426 residues: Phosphomethylpyrimidine synthase (426 aa).

Substrate-binding positions include N66, M95, Y124, H163, S185–G187, D226–R229, and E265. A Zn(2+)-binding site is contributed by H269. Residue Y292 coordinates substrate. Residue H333 participates in Zn(2+) binding. Positions 407, 410, and 414 each coordinate [4Fe-4S] cluster.

This sequence belongs to the ThiC family. [4Fe-4S] cluster serves as cofactor.

It catalyses the reaction 5-amino-1-(5-phospho-beta-D-ribosyl)imidazole + S-adenosyl-L-methionine = 4-amino-2-methyl-5-(phosphooxymethyl)pyrimidine + CO + 5'-deoxyadenosine + formate + L-methionine + 3 H(+). It functions in the pathway cofactor biosynthesis; thiamine diphosphate biosynthesis. Catalyzes the synthesis of the hydroxymethylpyrimidine phosphate (HMP-P) moiety of thiamine from aminoimidazole ribotide (AIR) in a radical S-adenosyl-L-methionine (SAM)-dependent reaction. The chain is Phosphomethylpyrimidine synthase from Thermococcus gammatolerans (strain DSM 15229 / JCM 11827 / EJ3).